The chain runs to 153 residues: MKLIPFPYPLNIGTDVVHLPRILRLINRPDYFHRFTRRILHEQEQRDFRTRFSLPPPSSGAEKTGLNPITPDMARWLAGRFAAKEAARKAAPAGASSLGWKDVIVRVGEADKGRPEIVYLDPMGCGETGGGRVGKLSISHDGDYVVATVLAAG.

Belongs to the P-Pant transferase superfamily.

It localises to the mitochondrion. The catalysed reaction is apo-[ACP] + CoA = holo-[ACP] + adenosine 3',5'-bisphosphate + H(+). In terms of biological role, acyl-carrier-protein synthase transfers the 4'-phosphopantetheine moiety from coenzyme A to a Ser of an acyl-carrier-protein. The 4'-phosphopantetheine (4'-PPT) portion of CoA provides the essential prosthetic group for a number of carrier proteins and multi-domain enzymes, priming them for the acceptance of acyl building blocks in fatty acid synthesis and many aspects of secondary metabolism mediated by polyketide synthases (PKSs) and non-ribosomal peptide synthetases (NRPSs). PptB is specific for the mitochondrial acyl carrier protein acpA. This is 4'-phosphopantetheinyl transferase B, mitochondrial from Aspergillus fumigatus (strain ATCC MYA-4609 / CBS 101355 / FGSC A1100 / Af293) (Neosartorya fumigata).